An 865-amino-acid polypeptide reads, in one-letter code: Anaphase-promoting complex subunit 2 (865 aa).

Belongs to the cullin family. The APC/C is composed of at least 10 subunits. Interacts with APC8, APC11, CDC27A and CDC27B. As to expression, highly expressed in immature flowers. Expressed in stems, leaves and flowers.

Its subcellular location is the nucleus. It functions in the pathway protein modification; protein ubiquitination. Its function is as follows. Component of the anaphase promoting complex/cyclosome (APC/C), a cell cycle-regulated E3 ubiquitin-protein ligase complex that controls progression through mitosis and the G1 phase of the cell cycle. The APC/C complex controls several key steps in the cell cycle by mediating ubiquitination and subsequent degradation of target proteins such as cyclins. The APC/C complex is required for the female gametophyte development and is involved in several aspect of development by controlling cell division and cell elongation. Involved in the control of endoreduplication. The chain is Anaphase-promoting complex subunit 2 (APC2) from Arabidopsis thaliana (Mouse-ear cress).